Consider the following 340-residue polypeptide: Mitotic checkpoint protein BUB3.1 (340 aa).

Residues 1-20 (MTTVTPSAGRELSNPPSDGI) form a disordered region. WD repeat units follow at residues 15–54 (PPSDGISNLRFSNNSDHLLVSSWDKRVRLYDVSTNSLKGE), 96–135 (THDKAVRCVEYSYAAGQVITGSWDKTVKCWDPRGASGPER), 142–179 (LQPERVYSMSLVGHRLVVATAGRHVNIYDLRNMSQPEQ), 239–278 (DIVYPVNSIAFHPIYGTFATGGCDGFVNIWDGNNKKRLYQ), and 281–324 (KYPT…RSVN).

Belongs to the WD repeat BUB3 family. As to quaternary structure, part of the mitotic checkpoint complex (MCC); interacts with CDC20-1 and CDC20-2. Interacts with MAD2 and BUBR1. Expressed in actively dividing tissues, early in organ development, in young leaves, lateral root primordia and root meristems, flower buds, flowers and siliques.

It is found in the nucleus. Its subcellular location is the chromosome. It localises to the centromere. The protein resides in the kinetochore. The protein localises to the cytoplasm. It is found in the cytoskeleton. Its subcellular location is the phragmoplast. It localises to the spindle. In terms of biological role, has a dual function in spindle-assembly checkpoint signaling and in promoting the establishment of correct kinetochore-microtubule (K-MT) attachments. Promotes the formation of stable end-on bipolar attachments. Necessary for kinetochore localization of BUB1. The BUB1/BUB3 complex plays a role in the inhibition of anaphase-promoting complex or cyclosome (APC/C) when spindle-assembly checkpoint is activated and inhibits the ubiquitin ligase activity of APC/C by phosphorylating its activator CDC20. Essential for gametophyte development. This Arabidopsis thaliana (Mouse-ear cress) protein is Mitotic checkpoint protein BUB3.1 (BUB3.1).